A 270-amino-acid chain; its full sequence is 2-aminoethanethiol dioxygenase (270 aa).

The interval 21 to 48 (FRGSGGGRGASDRDAASGPEAPMQPGFP) is disordered. The Fe cation site is built by H112 and H114. Positions 140-164 (GGQRPRALPPEQQFEPPLQPREREA) are disordered. Position 193 (H193) interacts with Fe cation. A cross-link (3'-(S-cysteinyl)-tyrosine (Cys-Tyr)) is located at residues 220–223 (CHYY).

In terms of assembly, monomer. Fe cation is required as a cofactor.

The enzyme catalyses cysteamine + O2 = hypotaurine + H(+). It catalyses the reaction N-terminal L-cysteinyl-[protein] + O2 = N-terminal S-hydroxy-S-oxy-L-cysteinyl-[protein] + H(+). Its function is as follows. Plays a vital role in regulating thiol metabolism and preserving oxygen homeostasis by oxidizing the sulfur of cysteamine and N-terminal cysteine-containing proteins to their corresponding sulfinic acids using O2 as a cosubstrate. Catalyzes the oxidation of cysteamine (2-aminoethanethiol) to hypotaurine. Catalyzes the oxidation of regulators of G-protein signaling 4 (RGS4) and 5 (RGS5) and interleukin-32 (IL32). In Homo sapiens (Human), this protein is 2-aminoethanethiol dioxygenase (ADO).